The primary structure comprises 274 residues: Large ribosomal subunit protein uL2 (274 aa).

The interval 221–274 (RGTAMNPVDHPHGGGEGRNFGKHPVTPWGVQTKGKKTRNNKRTDKSIVRRRSKK) is disordered.

This sequence belongs to the universal ribosomal protein uL2 family. Part of the 50S ribosomal subunit. Forms a bridge to the 30S subunit in the 70S ribosome.

In terms of biological role, one of the primary rRNA binding proteins. Required for association of the 30S and 50S subunits to form the 70S ribosome, for tRNA binding and peptide bond formation. It has been suggested to have peptidyltransferase activity; this is somewhat controversial. Makes several contacts with the 16S rRNA in the 70S ribosome. This Hamiltonella defensa subsp. Acyrthosiphon pisum (strain 5AT) protein is Large ribosomal subunit protein uL2.